The chain runs to 561 residues: MVASSSSATASLLDQLFALTPLADSSAWIKTITVLVLLPLLAVVLNVASQLLLATPKNHPPVVFHFVPVIGSAIYYGIDPYKFFFECREKYGDVFTFVLLGRKITVALGPKGSNLVFNAKHQQVTAEDAYTHLTTPVFGKEVVYDVPNAVFMEQKKFVKVGLSIENFRVYVPQIVDEVREYIKSDARFSALKTRKTITVDIFQAMSELIILTASRTLQGKEVRQGLDKSFAQLYHDLDSGFTPINFVIPNLPLPSNFKRDRAQKKMSQFYQDIVAKRRAAGASTSADDASGENDMIAALIEQKYKNGRALSGVEIAHMMIALLMAGQHTSSATSSWAFLRLASRPEIIEELYEEQLNVYSDGHGGLRELDYETQKTSVPLLDAVVKETLRLHPPLHSIMRYVKSDLAVPPTLSSPTSTKSEPDAHYVIPKGHYIMAAPGVSQVDPQIWKSSDQFDPHRWLDATTAAAMQDSGEDKQDFGFGMISTGANSPYLPFGAGRHRCIGEQFAYLQIGVILATFVRIFKWHLDSKFPDPDYQSMVVLPSKNGCAIVLTPRAESLHLD.

Cys-501 is a heme binding site.

Belongs to the cytochrome P450 family. It depends on heme as a cofactor.

Its subcellular location is the membrane. It carries out the reaction a 14alpha-methyl steroid + 3 reduced [NADPH--hemoprotein reductase] + 3 O2 = a Delta(14) steroid + formate + 3 oxidized [NADPH--hemoprotein reductase] + 4 H2O + 4 H(+). The enzyme catalyses a 14alpha-methyl steroid + reduced [NADPH--hemoprotein reductase] + O2 = a 14alpha-hydroxymethyl steroid + oxidized [NADPH--hemoprotein reductase] + H2O + H(+). The catalysed reaction is a 14alpha-hydroxymethyl steroid + reduced [NADPH--hemoprotein reductase] + O2 = a 14alpha-formyl steroid + oxidized [NADPH--hemoprotein reductase] + 2 H2O + H(+). It catalyses the reaction a 14alpha-formyl steroid + reduced [NADPH--hemoprotein reductase] + O2 = a Delta(14) steroid + formate + oxidized [NADPH--hemoprotein reductase] + H2O + 2 H(+). It carries out the reaction lanosterol + 3 reduced [NADPH--hemoprotein reductase] + 3 O2 = 4,4-dimethyl-5alpha-cholesta-8,14,24-trien-3beta-ol + formate + 3 oxidized [NADPH--hemoprotein reductase] + 4 H2O + 4 H(+). The enzyme catalyses lanosterol + reduced [NADPH--hemoprotein reductase] + O2 = 32-hydroxylanosterol + oxidized [NADPH--hemoprotein reductase] + H2O + H(+). The catalysed reaction is 32-hydroxylanosterol + reduced [NADPH--hemoprotein reductase] + O2 = 32-oxolanosterol + oxidized [NADPH--hemoprotein reductase] + 2 H2O + H(+). It catalyses the reaction 32-oxolanosterol + reduced [NADPH--hemoprotein reductase] + O2 = 4,4-dimethyl-5alpha-cholesta-8,14,24-trien-3beta-ol + formate + oxidized [NADPH--hemoprotein reductase] + H2O + 2 H(+). It carries out the reaction eburicol + 3 reduced [NADPH--hemoprotein reductase] + 3 O2 = 14-demethyleburicol + formate + 3 oxidized [NADPH--hemoprotein reductase] + 4 H2O + 4 H(+). The enzyme catalyses eburicol + reduced [NADPH--hemoprotein reductase] + O2 = 32-hydroxyeburicol + oxidized [NADPH--hemoprotein reductase] + H2O + H(+). The catalysed reaction is 32-hydroxyeburicol + reduced [NADPH--hemoprotein reductase] + O2 = 32-oxoeburicol + oxidized [NADPH--hemoprotein reductase] + 2 H2O + H(+). It catalyses the reaction 32-oxoeburicol + reduced [NADPH--hemoprotein reductase] + O2 = 14-demethyleburicol + formate + oxidized [NADPH--hemoprotein reductase] + H2O + 2 H(+). Its pathway is steroid biosynthesis; zymosterol biosynthesis; zymosterol from lanosterol: step 1/6. In terms of biological role, sterol 14alpha-demethylase that plays a critical role in the third module of ergosterol biosynthesis pathway, being ergosterol the major sterol component in fungal membranes that participates in a variety of functions. The third module or late pathway involves the ergosterol synthesis itself through consecutive reactions that mainly occur in the endoplasmic reticulum (ER) membrane. In filamentous fungi, during the initial step of this module, lanosterol (lanosta-8,24-dien-3beta-ol) can be metabolized to eburicol. Sterol 14alpha-demethylase catalyzes the three-step oxidative removal of the 14alpha-methyl group (C-32) of both these sterols in the form of formate, and converts eburicol and lanosterol to 14-demethyleburicol (4,4,24-trimethylergosta-8,14,24(28)-trienol) and 4,4-dimethyl-5alpha-cholesta-8,14,24-trien-3beta-ol, respectively, which are further metabolized by other enzymes in the pathway to ergosterol. Can also use substrates not intrinsic to fungi, such as 24,25-dihydrolanosterol (DHL), producing 4,4-dimethyl-8,14-cholestadien-3-beta-ol, but at lower rates than the endogenous substrates. The polypeptide is Lanosterol 14-alpha demethylase (ERG11) (Mycosarcoma maydis (Corn smut fungus)).